Consider the following 693-residue polypeptide: Histone-lysine N-methyltransferase, H3 lysine-9 specific SUVH7 (693 aa).

2 disordered regions span residues 64–99 and 111–175; these read WYDG…PPEM and DSSN…AETE. Residues 129–141 constitute a DNA-binding region (a.T hook); that stretch reads KRGRGRPKGSKNS. Residues 227–373 form the YDG domain; that stretch reads GAVPGIHVGD…FKEFRFKLVR (147 aa). Residues 454–516 enclose the Pre-SET domain; the sequence is QSLGCQNCRH…HCPTRLVQTG (63 aa). 9 residues coordinate Zn(2+): Cys458, Cys461, Cys466, Cys471, Cys473, Cys498, Cys502, Cys504, and Cys508. In terms of domain architecture, SET spans 519 to 660; it reads LHLEVFKTRN…PMTELTYDYG (142 aa). Residues 529-531, Asp562, Tyr564, Arg614, and 617-618 each bind S-adenosyl-L-methionine; these read CGW and NH. Cys620, Cys681, Cys683, and Cys688 together coordinate Zn(2+). One can recognise a Post-SET domain in the interval 677–693; the sequence is GKKTCLCGSVKCRGSFT.

Belongs to the class V-like SAM-binding methyltransferase superfamily. Histone-lysine methyltransferase family. Suvar3-9 subfamily.

It localises to the nucleus. Its subcellular location is the chromosome. The protein resides in the centromere. The enzyme catalyses N(6)-methyl-L-lysyl(9)-[histone H3] + S-adenosyl-L-methionine = N(6),N(6)-dimethyl-L-lysyl(9)-[histone H3] + S-adenosyl-L-homocysteine + H(+). The catalysed reaction is L-lysyl(9)-[histone H3] + S-adenosyl-L-methionine = N(6)-methyl-L-lysyl(9)-[histone H3] + S-adenosyl-L-homocysteine + H(+). Histone methyltransferase. Methylates 'Lys-9' of histone H3. H3 'Lys-9' methylation represents a specific tag for epigenetic transcriptional repression. The chain is Histone-lysine N-methyltransferase, H3 lysine-9 specific SUVH7 (SUVH7) from Arabidopsis thaliana (Mouse-ear cress).